The sequence spans 55 residues: uncharacterized protein (55 aa).

A coiled-coil region spans residues 17–44; it reads QNVNIALTKKRLDTAQQNADQTLKMIQH.

This is an uncharacterized protein from Bacillus subtilis (strain 168).